The primary structure comprises 169 residues: Der GTPase-activating protein YihI (169 aa).

Disordered stretches follow at residues 1 to 83 (MNPL…PTKP) and 150 to 169 (DEEEREEEKQDDIMQLLKGN). The span at 21-30 (NREELNAEGR) shows a compositional bias: basic and acidic residues. Residues 31–40 (ARKREKKHRG) show a composition bias toward basic residues. 2 stretches are compositionally biased toward basic and acidic residues: residues 51 to 66 (SGDKHPSGKQQRDPRL) and 150 to 161 (DEEEREEEKQDD).

This sequence belongs to the YihI family. Interacts with Der.

In terms of biological role, a GTPase-activating protein (GAP) that modifies Der/EngA GTPase function. May play a role in ribosome biogenesis. This chain is Der GTPase-activating protein YihI, found in Photorhabdus laumondii subsp. laumondii (strain DSM 15139 / CIP 105565 / TT01) (Photorhabdus luminescens subsp. laumondii).